Here is a 70-residue protein sequence, read N- to C-terminus: DNA-directed RNA polymerase subunit epsilon (70 aa).

The protein belongs to the RNA polymerase subunit epsilon family. As to quaternary structure, RNAP is composed of a core of 2 alpha, a beta and a beta' subunit. The core is associated with a delta subunit, and at least one of epsilon or omega. When a sigma factor is associated with the core the holoenzyme is formed, which can initiate transcription.

The catalysed reaction is RNA(n) + a ribonucleoside 5'-triphosphate = RNA(n+1) + diphosphate. A non-essential component of RNA polymerase (RNAP). In Bacillus cereus (strain ZK / E33L), this protein is DNA-directed RNA polymerase subunit epsilon.